The sequence spans 264 residues: Siroheme biosynthesis protein met8 (264 aa).

Residues 32–33 and 53–56 contribute to the NAD(+) site; these read VV and PKAG. D117 serves as the catalytic Proton acceptor.

This sequence belongs to the precorrin-2 dehydrogenase / sirohydrochlorin ferrochelatase family. MET8 subfamily.

Its subcellular location is the cytoplasm. It is found in the nucleus. The enzyme catalyses precorrin-2 + NAD(+) = sirohydrochlorin + NADH + 2 H(+). It carries out the reaction siroheme + 2 H(+) = sirohydrochlorin + Fe(2+). The protein operates within porphyrin-containing compound metabolism; siroheme biosynthesis; siroheme from sirohydrochlorin: step 1/1. It functions in the pathway porphyrin-containing compound metabolism; siroheme biosynthesis; sirohydrochlorin from precorrin-2: step 1/1. Its function is as follows. Catalyzes the conversion of precorrin-2 into siroheme. This reaction consist of the NAD-dependent oxidation of precorrin-2 into sirohydrochlorin and its subsequent ferrochelation into siroheme. In Schizosaccharomyces pombe (strain 972 / ATCC 24843) (Fission yeast), this protein is Siroheme biosynthesis protein met8 (met8).